A 222-amino-acid polypeptide reads, in one-letter code: Thymidylate kinase (222 aa).

ATP is bound at residue 10-17; it reads GLEGAGKS.

The protein belongs to the thymidylate kinase family.

It carries out the reaction dTMP + ATP = dTDP + ADP. Its function is as follows. Phosphorylation of dTMP to form dTDP in both de novo and salvage pathways of dTTP synthesis. The protein is Thymidylate kinase of Alteromonas mediterranea (strain DSM 17117 / CIP 110805 / LMG 28347 / Deep ecotype).